Reading from the N-terminus, the 393-residue chain is Phosphoglycerate kinase (393 aa).

Substrate is bound by residues 22-24, R37, 60-63, R119, and R152; these read DFN and HLGR. ATP is bound by residues K202, G293, E324, and 350–353; that span reads GGDS.

Belongs to the phosphoglycerate kinase family. In terms of assembly, monomer.

The protein resides in the cytoplasm. The enzyme catalyses (2R)-3-phosphoglycerate + ATP = (2R)-3-phospho-glyceroyl phosphate + ADP. It participates in carbohydrate degradation; glycolysis; pyruvate from D-glyceraldehyde 3-phosphate: step 2/5. The protein is Phosphoglycerate kinase (pgk) of Borreliella burgdorferi (strain ATCC 35210 / DSM 4680 / CIP 102532 / B31) (Borrelia burgdorferi).